A 224-amino-acid chain; its full sequence is C-reactive protein (224 aa).

An N-terminal signal peptide occupies residues 1–18; the sequence is MEKLLCFLVLTSLSHAFG. Q19 is subject to Pyrrolidone carboxylic acid. In terms of domain architecture, Pentraxin (PTX) spans 23–224; the sequence is SRKAFVFPKE…EVFTKPQLWP (202 aa). A disulfide bridge links C54 with C115. Positions 78, 79, 156, 157, 158, and 168 each coordinate Ca(2+).

It belongs to the pentraxin family. In terms of assembly, homopentamer. Pentraxin (or pentaxin) have a discoid arrangement of 5 non-covalently bound subunits. Interacts with FCN1; may regulate monocyte activation by FCN1. Ca(2+) is required as a cofactor. In terms of tissue distribution, found in plasma.

Its subcellular location is the secreted. In terms of biological role, displays several functions associated with host defense: it promotes agglutination, bacterial capsular swelling, phagocytosis and complement fixation through its calcium-dependent binding to phosphorylcholine. Can interact with DNA and histones and may scavenge nuclear material released from damaged circulating cells. This chain is C-reactive protein (CRP), found in Homo sapiens (Human).